A 556-amino-acid polypeptide reads, in one-letter code: MKTDINIAQAATLKPIQEIAETIGLSEDSLELYGKYKAKIDFPTLQSLEAQPEGKLILVTSINPTPAGEGKSTVTIGLGDALNQINKKTVIALREPSLGPVMGIKGGATGGGYAQVLPMEEINLHFTGDMHAITTANNALAALLDNHLQQGNELKIDSRRVIWKRAVDLNDRALRQVVVGLGGPFQGVPREDGFDITVASEIMAILCLAQNLTDLKERLSRIIVAYNDQREPVTVKDLNVAGALTLLLKDALKPNLVQTIEGTPAFVHGGPFANIAHGCNSILATKTALHLGDYVVTEAGFGGDLGGEKFLDIKVPSLGKAPDAVVIVATIRALKMHGGLAKDQLAEENLPALQKGFANLEKHIQNMQRYDVPVVVAINEFTQDTEKEIQLLKEACQALGVPVELTSVWAQGGAGGTNLAKTVVAEIEADTKQFQPLYNPRQTIEEKIQAIVQTIYGGEQAIFSPKAQKQIADFTKNGWDQLPICMAKTQYSLSDDPQKLGRPEGFTITIRELVPKIGAGFIVALTGDILTMPGLPKVPAALNMDVDETGQASGLF.

An ATP-binding site is contributed by 65–72; sequence TPAGEGKS.

The protein belongs to the formate--tetrahydrofolate ligase family.

The enzyme catalyses (6S)-5,6,7,8-tetrahydrofolate + formate + ATP = (6R)-10-formyltetrahydrofolate + ADP + phosphate. Its pathway is one-carbon metabolism; tetrahydrofolate interconversion. The protein is Formate--tetrahydrofolate ligase of Enterococcus faecalis (strain ATCC 700802 / V583).